We begin with the raw amino-acid sequence, 343 residues long: HTH-type transcriptional regulator GntR (343 aa).

The HTH lacI-type domain occupies Pro16 to Ser70. A DNA-binding region (H-T-H motif) is located at residues Leu18–Arg37.

Its activity is regulated as follows. Free GntR fails to recognize gluconate and 6-phosphogluconate, whereas the GntR/DNA complexes recognize both ligands. It is therefore likely that GntR DNA binding induces structural changes that permit GntR to recognize effectors. Its function is as follows. Involved in the regulation of glucose metabolism. Represses its own expression as well as that of the gluconate permease GntP. It employs an effector mediated de-repression mechanism: in the absence of ligand, GntR binds to the gntR and gntP promoters and represses their expression. The release of promoter bound GntR is induced by gluconate and 6-phosphogluconate that bind with similar apparent affinities to the GntR/DNA complex. The release of GntR leads to transcription of the genes. This is HTH-type transcriptional regulator GntR from Pseudomonas aeruginosa (strain ATCC 15692 / DSM 22644 / CIP 104116 / JCM 14847 / LMG 12228 / 1C / PRS 101 / PAO1).